The chain runs to 263 residues: Serine protease ami (263 aa).

A signal peptide spans 1–21 (MNISRVLFAVVLVLTVSTYEC). N-linked (GlcNAc...) asparagine glycosylation is present at asparagine 2. A propeptide spans 22–26 (RPRGR) (activation peptide). One can recognise a Peptidase S1 domain in the interval 27–254 (ILGGQDSKEK…YKSWIMETMY (228 aa)). The cysteines at positions 52 and 68 are disulfide-linked. Residue histidine 67 is the Charge relay system of the active site. N-linked (GlcNAc...) asparagine glycosylation is found at asparagine 73, asparagine 74, and asparagine 108. Aspartate 115 (charge relay system) is an active-site residue. 3 cysteine pairs are disulfide-bonded: cysteine 149–cysteine 215, cysteine 180–cysteine 196, and cysteine 205–cysteine 230. Serine 209 acts as the Charge relay system in catalysis. Asparagine 255 is a glycosylation site (N-linked (GlcNAc...) asparagine).

The protein belongs to the peptidase S1 family. In the embryo, localizes to paraxial regions at the neurula stage and anterior ventral regions at the tailbud stage. From the late tailbud to tadpole stage, expressed along the forming blood vessels including the anterior cardinal veins, posterior cardinal veins, intersomitic veins, dorsal longitudinal anastomosing vessel, dorsal aorta, pronephric sinus and most prominently around the vascular vitelline network, where expression shows left-right asymmetry in the stage 42 embryo. Localizes to endothelial cells. In adults, shows highest expression in liver with moderate levels of expression in the fat body, lung, gut and vessels. Weakly expressed in adult heart, muscle, testis and ovary.

Its subcellular location is the secreted. Functionally, probable serine protease. In Xenopus laevis (African clawed frog), this protein is Serine protease ami.